A 195-amino-acid chain; its full sequence is Interferon tau-1 (195 aa).

An N-terminal signal peptide occupies residues 1-23 (MAFVLSLLMALVLVSYGPGRSLG). Cystine bridges form between Cys24/Cys122 and Cys52/Cys162. An N-linked (GlcNAc...) asparagine glycan is attached at Asn101.

Belongs to the alpha/beta interferon family. IFN-alphaII subfamily. As to expression, constitutively and exclusively expressed in the mononuclear cells of the extraembryonic trophectoderm.

Its subcellular location is the secreted. Paracrine hormone primarily responsible for maternal recognition of pregnancy. Interacts with endometrial receptors, probably type I interferon receptors, and blocks estrogen receptor expression, preventing the estrogen-induced increase in oxytocin receptor expression in the endometrium. This results in the suppression of the pulsatile endometrial release of the luteolytic hormone prostaglandin F2-alpha, hindering the regression of the corpus luteum (luteolysis) and therefore a return to ovarian cyclicity. This, and a possible direct effect of IFN-tau on prostaglandin synthesis, leads in turn to continued ovarian progesterone secretion, which stimulates the secretion by the endometrium of the nutrients required for the growth of the conceptus. In summary, displays particularly high antiviral and antiproliferative potency concurrently with particular weak cytotoxicity, high antiluteolytic activity and immunomodulatory properties. In contrast with other IFNs, IFN-tau is not virally inducible. The sequence is that of Interferon tau-1 (IFNT1) from Bos taurus (Bovine).